We begin with the raw amino-acid sequence, 111 residues long: Guanylate cyclase activator 2B (111 aa).

The first 26 residues, 1-26 (MGSRTLLGHLSVLAVVLLLLLQGTQS), serve as a signal peptide directing secretion. Positions 27–96 (VDIKYQGYQV…SILQALRTMD (70 aa)) are excised as a propeptide. 3 disulfides stabilise this stretch: cysteine 67/cysteine 80, cysteine 100/cysteine 108, and cysteine 103/cysteine 111.

It belongs to the guanylin family.

It localises to the secreted. Endogenous activator of intestinal guanylate cyclase. It stimulates this enzyme through the same receptor binding region as the heat-stable enterotoxins. May be a potent physiological regulator of intestinal fluid and electrolyte transport. May be an autocrine/paracrine regulator of intestinal salt and water transport. In Cavia porcellus (Guinea pig), this protein is Guanylate cyclase activator 2B (GUCA2B).